We begin with the raw amino-acid sequence, 606 residues long: Polypeptide N-acetylgalactosaminyltransferase 9 (606 aa).

At 1 to 6 (MAVARK) the chain is on the cytoplasmic side. A helical; Signal-anchor for type II membrane protein membrane pass occupies residues 7 to 29 (IRTLLTVNILVFVGIVLFSVYCR). Topologically, residues 30–606 (LQGRSQELVR…IRNWIKHARH (577 aa)) are lumenal. The segment at 43–62 (GGCRPRPATPAPGSPLRSGG) is disordered. 2 cysteine pairs are disulfide-bonded: C144–C375 and C366–C445. Positions 153–264 (LPQVSVVFIF…TGWAEPALSR (112 aa)) are catalytic subdomain A. D194 and R225 together coordinate substrate. Residues D248, H250, and H380 each coordinate Mn(2+). Residues 321 to 383 (PIRTPAMIGC…PCSRVAHIER (63 aa)) are catalytic subdomain B. Substrate contacts are provided by R383 and Y388. A glycan (N-linked (GlcNAc...) asparagine) is linked at N463. In terms of domain architecture, Ricin B-type lectin spans 467 to 603 (TYGEVRNSKA…KWMIRNWIKH (137 aa)). 3 disulfides stabilise this stretch: C480/C496, C528/C543, and C570/C590.

This sequence belongs to the glycosyltransferase 2 family. GalNAc-T subfamily. Mn(2+) is required as a cofactor.

The protein resides in the golgi apparatus membrane. The catalysed reaction is L-seryl-[protein] + UDP-N-acetyl-alpha-D-galactosamine = a 3-O-[N-acetyl-alpha-D-galactosaminyl]-L-seryl-[protein] + UDP + H(+). The enzyme catalyses L-threonyl-[protein] + UDP-N-acetyl-alpha-D-galactosamine = a 3-O-[N-acetyl-alpha-D-galactosaminyl]-L-threonyl-[protein] + UDP + H(+). It participates in protein modification; protein glycosylation. Catalyzes the initial reaction in O-linked oligosaccharide biosynthesis, the transfer of an N-acetyl-D-galactosamine residue to a serine or threonine residue on the protein receptor. Does not glycosylate apomucin or SDC3. This Macaca fascicularis (Crab-eating macaque) protein is Polypeptide N-acetylgalactosaminyltransferase 9 (GALNT9).